The primary structure comprises 201 residues: UPF0301 protein CE2927 (201 aa).

It belongs to the UPF0301 (AlgH) family.

This chain is UPF0301 protein CE2927, found in Corynebacterium efficiens (strain DSM 44549 / YS-314 / AJ 12310 / JCM 11189 / NBRC 100395).